Reading from the N-terminus, the 439-residue chain is GTPase Obg (439 aa).

The Obg domain occupies 3–162 (GEFYDSARIF…REIELELKLL (160 aa)). The OBG-type G domain occupies 163–333 (ADVGLIGFPN…LLQRVAERLR (171 aa)). Residues 169–176 (GFPNAGKS), 194–198 (FTTLQ), 215–218 (DIPG), 285–288 (NKAD), and 314–316 (SAA) each bind GTP. S176 and T196 together coordinate Mg(2+). The OCT domain maps to 351–428 (VPEVDERLYT…IEQAAFDWED (78 aa)).

It belongs to the TRAFAC class OBG-HflX-like GTPase superfamily. OBG GTPase family. In terms of assembly, monomer. Mg(2+) serves as cofactor.

The protein localises to the cytoplasm. Functionally, an essential GTPase which binds GTP, GDP and possibly (p)ppGpp with moderate affinity, with high nucleotide exchange rates and a fairly low GTP hydrolysis rate. Plays a role in control of the cell cycle, stress response, ribosome biogenesis and in those bacteria that undergo differentiation, in morphogenesis control. In Roseiflexus castenholzii (strain DSM 13941 / HLO8), this protein is GTPase Obg.